Here is an 856-residue protein sequence, read N- to C-terminus: Lon protease homolog 2, peroxisomal (856 aa).

A Lon N-terminal domain is found at 13-222 (LPLLLTHEGV…VTIPLLLRQI (210 aa)). Residue 379–386 (GPPGVGKT) participates in ATP binding. Over residues 586–608 (GQHREHKSEHLEAPEGEERKESV) the composition is skewed to basic and acidic residues. The disordered stretch occupies residues 586–614 (GQHREHKSEHLEAPEGEERKESVPEGSKS). The region spanning 655-841 (LNQPGVAIGL…DEVLNAAFDG (187 aa)) is the Lon proteolytic domain. Catalysis depends on residues S747 and K790. The short motif at 854–856 (SKL) is the Microbody targeting signal element.

The protein belongs to the peptidase S16 family.

It localises to the peroxisome matrix. It carries out the reaction Hydrolysis of proteins in presence of ATP.. Functionally, ATP-dependent serine protease that mediates the selective degradation of misfolded and unassembled polypeptides in the peroxisomal matrix. Necessary for type 2 peroxisome targeting signal (PTS2)-containing protein processing and facilitates peroxisome matrix protein import. In Xenopus laevis (African clawed frog), this protein is Lon protease homolog 2, peroxisomal (lonp2).